We begin with the raw amino-acid sequence, 137 residues long: Nucleoside diphosphate kinase (137 aa).

Residues Lys-9, Phe-57, Arg-85, Thr-91, Arg-102, and Asn-112 each coordinate ATP. His-115 serves as the catalytic Pros-phosphohistidine intermediate.

This sequence belongs to the NDK family. Homotetramer. The cofactor is Mg(2+).

It is found in the cytoplasm. The enzyme catalyses a 2'-deoxyribonucleoside 5'-diphosphate + ATP = a 2'-deoxyribonucleoside 5'-triphosphate + ADP. The catalysed reaction is a ribonucleoside 5'-diphosphate + ATP = a ribonucleoside 5'-triphosphate + ADP. In terms of biological role, major role in the synthesis of nucleoside triphosphates other than ATP. The ATP gamma phosphate is transferred to the NDP beta phosphate via a ping-pong mechanism, using a phosphorylated active-site intermediate. This Syntrophotalea carbinolica (strain DSM 2380 / NBRC 103641 / GraBd1) (Pelobacter carbinolicus) protein is Nucleoside diphosphate kinase.